The sequence spans 774 residues: MTTESKTKTVTHILGYPRVGAQRELKFAQEKYWRGEIEQKELLAVGSELRQRHWKDQSASGLDFVTAGDFAWYDHVLTTSLLLGHVPARHNNGFPDLDTLFKVGRGQSQNSCGCGEAASDMTKWFNTNYHYIVPEFSKNDKFNVSWSQLFDEIAEAQKQGHNVKPVLLGPLSYLWLGKEVNDEEVEQGFDRLSLLPRLLTAYQAIFSKLSALGVEWVQIDEPILALELPKAWADSFKLAYQVIQSDVKLLLTTYFDGVEHHLDKITKLAVNGLHIDVSAAPDQLDAIVSALPKEWVLSVGAVNGRNVWRADLERLHERLQPVKEALGDKLWIASSCSLLHSPVDLEQETELSKETLQWFAFAKQKLREVTLLADALDGNQNAILACHQYSQPLRERESAEHINKPAVQQRLAAITPALAERAEAYSVRAQHQAEKLGLPLLPTTTIGSFPQTSDIRQQRSAYRTGKLNEQDYVTAMKGHIADAVERQERLDLDVLVHGEAERNDMVEYFAENLNGFQATRFGWVQSYGSRCVKPAIVVADIEREAPITVSWTQYAQSLTTKQMKGMLTGPVTILGWTFPREDITRKEIAQQLALVLRDEVSDLQQAGINIIQIDEPAIREGLPIKKSDQKAYLDWAVEAFKISAASAKSETQIHTHMCYSEFNEIIESVAALDADVITIETSRSNMELLKAFEDFNYPNEIGPGVYDIHSPNIPSQEWIVDLIETAAARVPVERLWVNPDCGLKTRNWKETEAALENMVKAAKALRKKWQSNAA.

Residues 23 to 26 and lysine 123 each bind 5-methyltetrahydropteroyltri-L-glutamate; that span reads RELK. L-homocysteine contacts are provided by residues 446-448 and glutamate 499; that span reads IGS. Residues 446 to 448 and glutamate 499 contribute to the L-methionine site; that span reads IGS. Residues 530-531 and tryptophan 576 contribute to the 5-methyltetrahydropteroyltri-L-glutamate site; that span reads RC. Aspartate 614 is an L-homocysteine binding site. Aspartate 614 provides a ligand contact to L-methionine. Glutamate 620 contributes to the 5-methyltetrahydropteroyltri-L-glutamate binding site. Zn(2+) contacts are provided by histidine 656, cysteine 658, and glutamate 680. Residue histidine 709 is the Proton donor of the active site. Cysteine 741 is a binding site for Zn(2+).

It belongs to the vitamin-B12 independent methionine synthase family. Requires Zn(2+) as cofactor.

It catalyses the reaction 5-methyltetrahydropteroyltri-L-glutamate + L-homocysteine = tetrahydropteroyltri-L-glutamate + L-methionine. Its pathway is amino-acid biosynthesis; L-methionine biosynthesis via de novo pathway; L-methionine from L-homocysteine (MetE route): step 1/1. Its function is as follows. Catalyzes the transfer of a methyl group from 5-methyltetrahydrofolate to homocysteine resulting in methionine formation. The chain is 5-methyltetrahydropteroyltriglutamate--homocysteine methyltransferase from Aliivibrio fischeri (strain MJ11) (Vibrio fischeri).